Consider the following 108-residue polypeptide: QFRPSVSRPDYKHIAIVSDNRYDNGDGNFGYDFETEHGINVEATGKPGSKGQSNIGGSYRFILPDGTTAEVRYFADELGYRAESPLIPTPHPLPAHAIEQIRFAESQR.

Residue Gln-1 is modified to Pyrrolidone carboxylic acid. Residues 26-91 (DGNFGYDFET…AESPLIPTPH (66 aa)) enclose the Chitin-binding type R&amp;R domain. An O-linked (HexNAc) threonine glycan is attached at Thr-89.

As to expression, arthrodial membrane.

In Cancer pagurus (Rock crab), this protein is Cuticle protein AM1199.